Reading from the N-terminus, the 828-residue chain is Protein SEY1 homolog (828 aa).

Topologically, residues 1-718 (MTEDVMNDDF…SSKNGISWKN (718 aa)) are cytoplasmic. The 241-residue stretch at 44–284 (GFNYNVLSIL…VPSDGFFYYA (241 aa)) folds into the GB1/RHD3-type G domain. 54–61 (GCQSSGKS) serves as a coordination point for GTP. Residues 719 to 739 (IPPPFWILLLLCSWNELCSVL) traverse the membrane as a helical segment. The Lumenal portion of the chain corresponds to 740–742 (RIV). The chain crosses the membrane as a helical span at residues 743-763 (FKVQVLIPLIILGFIVVQYFS). Topologically, residues 764-828 (HLVFGTSADA…NDSGKKAEEN (65 aa)) are cytoplasmic.

This sequence belongs to the TRAFAC class dynamin-like GTPase superfamily. GB1/RHD3 GTPase family. RHD3 subfamily.

It localises to the endoplasmic reticulum membrane. Probable GTP-binding protein that may be involved in cell development. This is Protein SEY1 homolog from Babesia bovis.